The chain runs to 570 residues: Urease subunit alpha (570 aa).

The 438-residue stretch at 133–570 (GGIDNHIHYI…LPLAQLYNLF (438 aa)) folds into the Urease domain. Ni(2+)-binding residues include H138, H140, and K221. K221 carries the N6-carboxylysine modification. H223 lines the substrate pocket. Ni(2+) contacts are provided by H250 and H276. H324 functions as the Proton donor in the catalytic mechanism. D364 is a Ni(2+) binding site.

Belongs to the metallo-dependent hydrolases superfamily. Urease alpha subunit family. As to quaternary structure, heterotrimer of UreA (gamma), UreB (beta) and UreC (alpha) subunits. Three heterotrimers associate to form the active enzyme. Ni cation is required as a cofactor. Carboxylation allows a single lysine to coordinate two nickel ions.

The protein localises to the cytoplasm. The enzyme catalyses urea + 2 H2O + H(+) = hydrogencarbonate + 2 NH4(+). The protein operates within nitrogen metabolism; urea degradation; CO(2) and NH(3) from urea (urease route): step 1/1. In Cytophaga hutchinsonii (strain ATCC 33406 / DSM 1761 / CIP 103989 / NBRC 15051 / NCIMB 9469 / D465), this protein is Urease subunit alpha.